Here is a 179-residue protein sequence, read N- to C-terminus: ATP synthase subunit delta (179 aa).

Belongs to the ATPase delta chain family. In terms of assembly, F-type ATPases have 2 components, F(1) - the catalytic core - and F(0) - the membrane proton channel. F(1) has five subunits: alpha(3), beta(3), gamma(1), delta(1), epsilon(1). F(0) has three main subunits: a(1), b(2) and c(10-14). The alpha and beta chains form an alternating ring which encloses part of the gamma chain. F(1) is attached to F(0) by a central stalk formed by the gamma and epsilon chains, while a peripheral stalk is formed by the delta and b chains.

Its subcellular location is the cell inner membrane. Its function is as follows. F(1)F(0) ATP synthase produces ATP from ADP in the presence of a proton or sodium gradient. F-type ATPases consist of two structural domains, F(1) containing the extramembraneous catalytic core and F(0) containing the membrane proton channel, linked together by a central stalk and a peripheral stalk. During catalysis, ATP synthesis in the catalytic domain of F(1) is coupled via a rotary mechanism of the central stalk subunits to proton translocation. This protein is part of the stalk that links CF(0) to CF(1). It either transmits conformational changes from CF(0) to CF(1) or is implicated in proton conduction. The protein is ATP synthase subunit delta of Burkholderia multivorans (strain ATCC 17616 / 249).